A 357-amino-acid chain; its full sequence is Anthranilate phosphoribosyltransferase (357 aa).

5-phospho-alpha-D-ribose 1-diphosphate-binding positions include G91, 94-95 (GD), T99, 101-104 (NIST), 119-127 (KHGNRSVSS), and S131. Anthranilate is bound at residue G91. S103 serves as a coordination point for Mg(2+). An anthranilate-binding site is contributed by N122. Position 177 (R177) interacts with anthranilate. 2 residues coordinate Mg(2+): D235 and E236.

It belongs to the anthranilate phosphoribosyltransferase family. Homodimer. Mg(2+) serves as cofactor.

It catalyses the reaction N-(5-phospho-beta-D-ribosyl)anthranilate + diphosphate = 5-phospho-alpha-D-ribose 1-diphosphate + anthranilate. Its pathway is amino-acid biosynthesis; L-tryptophan biosynthesis; L-tryptophan from chorismate: step 2/5. Its function is as follows. Catalyzes the transfer of the phosphoribosyl group of 5-phosphorylribose-1-pyrophosphate (PRPP) to anthranilate to yield N-(5'-phosphoribosyl)-anthranilate (PRA). This chain is Anthranilate phosphoribosyltransferase, found in Shewanella baltica (strain OS155 / ATCC BAA-1091).